Reading from the N-terminus, the 297-residue chain is Large ribosomal subunit protein uL3 (297 aa).

Disordered regions lie at residues 124–143 (NQKI…PVRQ) and 258–297 (MKEK…DKGE).

It belongs to the universal ribosomal protein uL3 family. Part of the 50S ribosomal subunit. Forms a cluster with proteins L14 and L19.

In terms of biological role, one of the primary rRNA binding proteins, it binds directly near the 3'-end of the 23S rRNA, where it nucleates assembly of the 50S subunit. The sequence is that of Large ribosomal subunit protein uL3 from Mycoplasma mobile (strain ATCC 43663 / 163K / NCTC 11711) (Mesomycoplasma mobile).